Here is a 682-residue protein sequence, read N- to C-terminus: DNA-directed RNA polymerase subunit beta' (682 aa).

Cysteine 69, cysteine 71, cysteine 87, and cysteine 90 together coordinate Zn(2+). Residues aspartate 489, aspartate 491, and aspartate 493 each contribute to the Mg(2+) site.

Belongs to the RNA polymerase beta' chain family. RpoC1 subfamily. In plastids the minimal PEP RNA polymerase catalytic core is composed of four subunits: alpha, beta, beta', and beta''. When a (nuclear-encoded) sigma factor is associated with the core the holoenzyme is formed, which can initiate transcription. Requires Mg(2+) as cofactor. The cofactor is Zn(2+).

Its subcellular location is the plastid. It is found in the chloroplast. It catalyses the reaction RNA(n) + a ribonucleoside 5'-triphosphate = RNA(n+1) + diphosphate. Its function is as follows. DNA-dependent RNA polymerase catalyzes the transcription of DNA into RNA using the four ribonucleoside triphosphates as substrates. The protein is DNA-directed RNA polymerase subunit beta' of Hordeum vulgare (Barley).